A 309-amino-acid chain; its full sequence is Porphobilinogen deaminase (309 aa).

Cys-240 is subject to S-(dipyrrolylmethanemethyl)cysteine.

Belongs to the HMBS family. Monomer. It depends on dipyrromethane as a cofactor.

The catalysed reaction is 4 porphobilinogen + H2O = hydroxymethylbilane + 4 NH4(+). It participates in porphyrin-containing compound metabolism; protoporphyrin-IX biosynthesis; coproporphyrinogen-III from 5-aminolevulinate: step 2/4. Its function is as follows. Tetrapolymerization of the monopyrrole PBG into the hydroxymethylbilane pre-uroporphyrinogen in several discrete steps. This chain is Porphobilinogen deaminase, found in Chromobacterium violaceum (strain ATCC 12472 / DSM 30191 / JCM 1249 / CCUG 213 / NBRC 12614 / NCIMB 9131 / NCTC 9757 / MK).